Reading from the N-terminus, the 73-residue chain is MQKDLHPKAVPCKIIYQGQVVMETMSTRPEIHVDVWSGVHPFWTGEERFLDTEGRVDKFNKRFGDSYRRGSKK.

It belongs to the bacterial ribosomal protein bL31 family. Type A subfamily. In terms of assembly, part of the 50S ribosomal subunit. Contacts protein L9.

In terms of biological role, binds the 23S rRNA and interacts with the tRNA in the E site. The chain is Large ribosomal subunit protein bL31 (rpmE) from Deinococcus radiodurans (strain ATCC 13939 / DSM 20539 / JCM 16871 / CCUG 27074 / LMG 4051 / NBRC 15346 / NCIMB 9279 / VKM B-1422 / R1).